The following is a 592-amino-acid chain: Medium-chain-fatty-acid--[acyl-carrier-protein] ligase JamA (592 aa).

Belongs to the ATP-dependent AMP-binding enzyme family.

It carries out the reaction a medium-chain fatty acid + holo-[ACP] + ATP = a medium-chain fatty acyl-[ACP] + AMP + diphosphate. It catalyses the reaction a medium-chain fatty acid + ATP + H(+) = a medium-chain fatty acyl-AMP + diphosphate. The catalysed reaction is a medium-chain fatty acyl-AMP + holo-[ACP] = a medium-chain fatty acyl-[ACP] + AMP + H(+). Its function is as follows. Ligase involved in the biosynthesis of jamaicamides, which show sodium channel blocking activity and fish toxicity. Initiates jamaicamide biosynthesis by the activation of the starter unit, 5-hexenoic acid, followed by the loading of the activated 5-hexenoic acid onto the acyl carrier protein JamC. In vitro, can also use 5-hexynoic acid, heptanoic acid, butanoic acid, hexanoic acid and benzoic acid. The sequence is that of Medium-chain-fatty-acid--[acyl-carrier-protein] ligase JamA from Moorena producens (strain JHB).